A 176-amino-acid chain; its full sequence is HTH-type transcriptional regulator DctR (176 aa).

Positions 109–174 constitute an HTH luxR-type domain; that stretch reads VPEANVSLSR…ELVRHQHIDY (66 aa). A DNA-binding region (H-T-H motif) is located at residues 133–152; that stretch reads TEDILEKLKISLKTFYCHKH.

In terms of biological role, may act as a transcriptional regulator of dctA. Could be involved in the regulation of the genes coding for the type III secretion system in enterohaemorragic strains. In Escherichia coli O157:H7, this protein is HTH-type transcriptional regulator DctR (dctR).